A 210-amino-acid chain; its full sequence is UPF0301 protein CPS_1252 (210 aa).

The protein belongs to the UPF0301 (AlgH) family.

In Colwellia psychrerythraea (strain 34H / ATCC BAA-681) (Vibrio psychroerythus), this protein is UPF0301 protein CPS_1252.